The chain runs to 290 residues: Enoyl-CoA hydratase, mitochondrial (290 aa).

The transit peptide at 1–27 (MAALRALLPRACSSLLSSVRCPELRRF) directs the protein to the mitochondrion. 98-101 (ADIK) provides a ligand contact to substrate. Lysine 101 is subject to N6-acetyllysine; alternate. Position 101 is an N6-succinyllysine; alternate (lysine 101). The residue at position 114 (serine 114) is a Phosphoserine. Residue lysine 115 is modified to N6-acetyllysine; alternate. N6-succinyllysine; alternate is present on lysine 115. Residue glycine 141 participates in substrate binding. Lysine 204 carries the post-translational modification N6-succinyllysine. The residue at position 211 (lysine 211) is an N6-acetyllysine. Lysine 217 is modified (N6-acetyllysine; alternate). Position 217 is an N6-succinyllysine; alternate (lysine 217).

Belongs to the enoyl-CoA hydratase/isomerase family. Homohexamer; dimer of trimers. Acetylation of Lys-101 is observed in liver mitochondria from fasted mice but not from fed mice.

The protein localises to the mitochondrion matrix. The catalysed reaction is a (3S)-3-hydroxyacyl-CoA = a (2E)-enoyl-CoA + H2O. It catalyses the reaction a (3E)-enoyl-CoA = a 4-saturated (2E)-enoyl-CoA. The enzyme catalyses (3E)-hexenoyl-CoA = (2E)-hexenoyl-CoA. It carries out the reaction (3S)-3-hydroxybutanoyl-CoA = (2E)-butenoyl-CoA + H2O. The catalysed reaction is 3-hydroxyisovaleryl-CoA = 3-methylbut-2-enoyl-CoA + H2O. It catalyses the reaction 3-hydroxypropanoyl-CoA = acryloyl-CoA + H2O. The enzyme catalyses 3-hydroxybutanoyl-CoA = (2E)-butenoyl-CoA + H2O. It carries out the reaction 2-methylpropenoyl-CoA + H2O = (S)-3-hydroxyisobutanoyl-CoA. The catalysed reaction is (3S)-hydroxyhexanoyl-CoA = (2E)-hexenoyl-CoA + H2O. It catalyses the reaction (3S)-hydroxydecanoyl-CoA = (2E)-decenoyl-CoA + H2O. It participates in lipid metabolism; fatty acid beta-oxidation. Functionally, converts unsaturated trans-2-enoyl-CoA species ((2E)-enoyl-CoA) to the corresponding (3S)-3-hydroxyacyl-CoA species through addition of a water molecule to the double bond. Catalyzes the hydration of medium- and short-chained fatty enoyl-CoA thioesters from 4 carbons long (C4) up to C16. Has high substrate specificity for crotonyl-CoA ((2E)-butenoyl-CoA) and moderate specificity for acryloyl-CoA, 3-methylcrotonyl-CoA (3-methyl-(2E)-butenoyl-CoA) and methacrylyl-CoA ((2E)-2-methylpropenoyl-CoA). Can bind tiglyl-CoA (2-methylcrotonoyl-CoA), but hydrates only a small amount of this substrate. Plays a key role in the beta-oxidation spiral of short- and medium-chain fatty acid oxidation. At a lower rate than the hydratase reaction, catalyzes the isomerase reaction of trans-3-enoyl-CoA species (such as (3E)-hexenoyl-CoA) to trans-2-enoyl-CoA species (such as (2E)-hexenoyl-CoA), which are subsequently hydrated to 3(S)-3-hydroxyacyl-CoA species (such as (3S)-hydroxyhexanoyl-CoA). The chain is Enoyl-CoA hydratase, mitochondrial from Mus musculus (Mouse).